The chain runs to 445 residues: Glutamate-1-semialdehyde 2,1-aminomutase (445 aa).

Lys263 is modified (N6-(pyridoxal phosphate)lysine).

It belongs to the class-III pyridoxal-phosphate-dependent aminotransferase family. HemL subfamily. The cofactor is pyridoxal 5'-phosphate.

The protein localises to the cytoplasm. It carries out the reaction (S)-4-amino-5-oxopentanoate = 5-aminolevulinate. The protein operates within porphyrin-containing compound metabolism; protoporphyrin-IX biosynthesis; 5-aminolevulinate from L-glutamyl-tRNA(Glu): step 2/2. The sequence is that of Glutamate-1-semialdehyde 2,1-aminomutase from Halorubrum lacusprofundi (strain ATCC 49239 / DSM 5036 / JCM 8891 / ACAM 34).